A 169-amino-acid polypeptide reads, in one-letter code: Disulfide bond formation protein B 1 (169 aa).

Topologically, residues 1-13 (MSALLKPLDNRLF) are cytoplasmic. A helical transmembrane segment spans residues 14-30 (WPAVAIGGLLILAFVLY). Topologically, residues 31 to 48 (LQHVRGFAPCSLCIFIRL) are periplasmic. Cys-40 and Cys-43 form a disulfide bridge. A helical transmembrane segment spans residues 49-64 (DVLGLVLAGIVGSLAP). The Cytoplasmic segment spans residues 65-71 (RSRIAGG). A helical transmembrane segment spans residues 72–89 (IAALGMLAASLGGIYHAW). At 90-145 (SLVAEEKLAAQGMGSCKMFMGFPEWIPLDTWLPQVFQPEGLCGEVVWTLLGQSMAV) the chain is on the periplasmic side. Residues Cys-105 and Cys-131 are joined by a disulfide bond. A helical membrane pass occupies residues 146–164 (WSLALFVFCLLVLAAKLAF). Residues 165–169 (GRRTA) lie on the Cytoplasmic side of the membrane.

It belongs to the DsbB family.

The protein resides in the cell inner membrane. Its function is as follows. Required for disulfide bond formation in some periplasmic proteins. Acts by oxidizing the DsbA protein. The polypeptide is Disulfide bond formation protein B 1 (Pseudomonas aeruginosa (strain UCBPP-PA14)).